Reading from the N-terminus, the 164-residue chain is Peptidyl-prolyl cis-trans isomerase A-like 4F (164 aa).

In terms of domain architecture, PPIase cyclophilin-type spans 7-163; that stretch reads FFEITRDGKP…KKITIADCGQ (157 aa).

Belongs to the cyclophilin-type PPIase family. PPIase A subfamily.

Its subcellular location is the cytoplasm. It carries out the reaction [protein]-peptidylproline (omega=180) = [protein]-peptidylproline (omega=0). PPIases accelerate the folding of proteins. It catalyzes the cis-trans isomerization of proline imidic peptide bonds in oligopeptides. This is Peptidyl-prolyl cis-trans isomerase A-like 4F from Homo sapiens (Human).